Reading from the N-terminus, the 69-residue chain is DNA-directed RNA polymerase subunit epsilon (69 aa).

Belongs to the RNA polymerase subunit epsilon family. RNAP is composed of a core of 2 alpha, a beta and a beta' subunit. The core is associated with a delta subunit, and at least one of epsilon or omega. When a sigma factor is associated with the core the holoenzyme is formed, which can initiate transcription.

It carries out the reaction RNA(n) + a ribonucleoside 5'-triphosphate = RNA(n+1) + diphosphate. Functionally, a non-essential component of RNA polymerase (RNAP). The protein is DNA-directed RNA polymerase subunit epsilon of Bacillus pumilus (strain SAFR-032).